We begin with the raw amino-acid sequence, 437 residues long: Proline--tRNA ligase (437 aa).

Belongs to the class-II aminoacyl-tRNA synthetase family. ProS type 2 subfamily. Homodimer.

The protein resides in the cytoplasm. The catalysed reaction is tRNA(Pro) + L-proline + ATP = L-prolyl-tRNA(Pro) + AMP + diphosphate. Catalyzes the attachment of proline to tRNA(Pro) in a two-step reaction: proline is first activated by ATP to form Pro-AMP and then transferred to the acceptor end of tRNA(Pro). In Rhizorhabdus wittichii (strain DSM 6014 / CCUG 31198 / JCM 15750 / NBRC 105917 / EY 4224 / RW1) (Sphingomonas wittichii), this protein is Proline--tRNA ligase.